A 375-amino-acid chain; its full sequence is 3-dehydroquinate synthase (375 aa).

NAD(+) is bound by residues 82–87 (SGETSK), 116–120 (GVVGD), 140–141 (TT), Lys-153, and Lys-162. Glu-195, His-259, and His-276 together coordinate Zn(2+).

Belongs to the sugar phosphate cyclases superfamily. Dehydroquinate synthase family. NAD(+) is required as a cofactor. Requires Co(2+) as cofactor. The cofactor is Zn(2+).

It is found in the cytoplasm. It catalyses the reaction 7-phospho-2-dehydro-3-deoxy-D-arabino-heptonate = 3-dehydroquinate + phosphate. Its pathway is metabolic intermediate biosynthesis; chorismate biosynthesis; chorismate from D-erythrose 4-phosphate and phosphoenolpyruvate: step 2/7. Its function is as follows. Catalyzes the conversion of 3-deoxy-D-arabino-heptulosonate 7-phosphate (DAHP) to dehydroquinate (DHQ). The protein is 3-dehydroquinate synthase of Rhodopirellula baltica (strain DSM 10527 / NCIMB 13988 / SH1).